The sequence spans 290 residues: uncharacterized protein (290 aa).

6 consecutive transmembrane segments (helical) span residues 71 to 91, 124 to 144, 155 to 175, 202 to 222, 234 to 254, and 262 to 282; these read FWSFSVLTTMIISCIIFVKNI, GILISSPFIVYQILLFVLPGM, IIIGSMILFLLGLIFGYYILV, FILVLLFGTALAFQLPVLQLV, MFSIWRYVILLSTVVGAVLTP, and ILLSSIILILYFGGASLVLVV.

The protein belongs to the TatC family.

It is found in the plastid. It localises to the chloroplast membrane. This is an uncharacterized protein from Guillardia theta (Cryptophyte).